The chain runs to 308 residues: Ribonuclease 3 (308 aa).

The region spanning 20–145 (YLRFYKMLGF…LVGAIYLDRG (126 aa)) is the RNase III domain. Glu-62 contributes to the Mg(2+) binding site. Asp-66 is a catalytic residue. Residues Asn-131 and Glu-134 each contribute to the Mg(2+) site. Glu-134 is an active-site residue. The DRBM domain occupies 173 to 242 (NFKSKLIEWS…ARVALGKIKN (70 aa)). Residues 261–281 (QEEVTVSDSKPSDSGAVTPDL) are disordered.

The protein belongs to the ribonuclease III family. In terms of assembly, homodimer. Mg(2+) is required as a cofactor.

Its subcellular location is the cytoplasm. It catalyses the reaction Endonucleolytic cleavage to 5'-phosphomonoester.. Digests double-stranded RNA. Involved in the processing of primary rRNA transcript to yield the immediate precursors to the large and small rRNAs (23S and 16S). Processes some mRNAs, and tRNAs when they are encoded in the rRNA operon. Processes pre-crRNA and tracrRNA of type II CRISPR loci if present in the organism. In Phocaeicola vulgatus (strain ATCC 8482 / DSM 1447 / JCM 5826 / CCUG 4940 / NBRC 14291 / NCTC 11154) (Bacteroides vulgatus), this protein is Ribonuclease 3.